Consider the following 364-residue polypeptide: Protein L-Myc (364 aa).

Disordered stretches follow at residues 41-81, 111-172, and 219-285; these read TSPP…HSKG, DRLA…EIDV, and PPES…KRKN. The segment covering 228–245 has biased composition (basic and acidic residues); that stretch reads ASERGPQEEVLERDAAGE. The 53-residue stretch at 281 to 333 folds into the bHLH domain; that stretch reads TKRKNHNFLERKRRNDLRSRFLALRDQVPTLASCSKAPKVVILSKALEYLQAL. Residues 333-361 are leucine-zipper; it reads LVGAEKRMATEKRQLRCRQQQLQKRIAYL.

Efficient DNA binding requires dimerization with another bHLH protein. Binds DNA as a heterodimer with MAX.

Its subcellular location is the nucleus. This is Protein L-Myc (MYCL) from Homo sapiens (Human).